The chain runs to 217 residues: Vesicle transport through interaction with t-SNAREs homolog 1A (217 aa).

The Cytoplasmic portion of the chain corresponds to 1–192; that stretch reads MSSDFEGYEQ…GMLRRIIQNR (192 aa). 2 coiled-coil regions span residues 31–92 and 112–178; these read PDEK…KRSR and ENQR…GKSS. Residues 193–213 form a helical; Anchor for type IV membrane protein membrane-spanning segment; that stretch reads ILLVILGIIVVIAILTAIAFF. Topologically, residues 214 to 217 are vesicular; that stretch reads VKGH.

The protein belongs to the VTI1 family. As to quaternary structure, interacts with distinct SNARE complexes that contain either STX5 or STX6. Interacts with NAPA and, to a lesser extent, with NAPG. Identified in a complex containing STX6, STX12, VAMP4 and VTI1A. Widely expressed.

It localises to the golgi apparatus membrane. In terms of biological role, V-SNARE that mediates vesicle transport pathways through interactions with t-SNAREs on the target membrane. These interactions are proposed to mediate aspects of the specificity of vesicle trafficking and to promote fusion of the lipid bilayers. Involved in vesicular transport from the late endosomes to the trans-Golgi network. Along with VAMP7, involved in an non-conventional RAB1-dependent traffic route to the cell surface used by KCNIP1 and KCND2. May be concerned with increased secretion of cytokines associated with cellular senescence. In Mus musculus (Mouse), this protein is Vesicle transport through interaction with t-SNAREs homolog 1A (Vti1a).